The chain runs to 932 residues: DNA mismatch repair protein MutS (932 aa).

Residue 615–622 (GPNMAGKS) participates in ATP binding.

Belongs to the DNA mismatch repair MutS family.

Functionally, this protein is involved in the repair of mismatches in DNA. It is possible that it carries out the mismatch recognition step. This protein has a weak ATPase activity. This is DNA mismatch repair protein MutS from Clostridium botulinum (strain Okra / Type B1).